The sequence spans 509 residues: Histidine ammonia-lyase (509 aa).

The 5-imidazolinone (Ala-Gly) cross-link spans A142–G144. S143 is modified (2,3-didehydroalanine (Ser)).

The protein belongs to the PAL/histidase family. Contains an active site 4-methylidene-imidazol-5-one (MIO), which is formed autocatalytically by cyclization and dehydration of residues Ala-Ser-Gly.

The protein localises to the cytoplasm. It catalyses the reaction L-histidine = trans-urocanate + NH4(+). The protein operates within amino-acid degradation; L-histidine degradation into L-glutamate; N-formimidoyl-L-glutamate from L-histidine: step 1/3. In Pseudomonas aeruginosa (strain UCBPP-PA14), this protein is Histidine ammonia-lyase.